Consider the following 2136-residue polypeptide: U5 small nuclear ribonucleoprotein 200 kDa helicase (2136 aa).

Serine 17 and serine 26 each carry phosphoserine. Residues 39–81 (EVLSLVGKLEGTRMGDKAQRTKPQMQEERRAKRRKRDEDRHDM) form a disordered region. Lysine 46 participates in a covalent cross-link: Glycyl lysine isopeptide (Lys-Gly) (interchain with G-Cter in SUMO2). Residues 48–81 (EGTRMGDKAQRTKPQMQEERRAKRRKRDEDRHDM) are compositionally biased toward basic and acidic residues. Residues 54–84 (DKAQRTKPQMQEERRAKRRKRDEDRHDMNKM) adopt a coiled-coil conformation. Residue serine 225 is modified to Phosphoserine. At threonine 389 the chain carries Phosphothreonine. The interaction with C9orf78 and WBP4 stretch occupies residues 395 to 2129 (DLDQGGEALA…YKFSVDVKEA (1735 aa)). The Helicase ATP-binding 1 domain occupies 490-673 (RAALETDENL…FLRVDPAKGL (184 aa)). 503 to 510 (APTGAGKT) contacts ATP. The short motif at 615 to 618 (DEIH) is the DEAH box element. Positions 684–921 (PLEQTYVGIT…NAKDAVNWLG (238 aa)) constitute a Helicase C-terminal 1 domain. A Phosphotyrosine modification is found at tyrosine 709. Lysine 944 is covalently cross-linked (Glycyl lysine isopeptide (Lys-Gly) (interchain with G-Cter in SUMO)). Lysine 971 bears the N6-acetyllysine; alternate mark. Lysine 971 is covalently cross-linked (Glycyl lysine isopeptide (Lys-Gly) (interchain with G-Cter in SUMO); alternate). Residues 982 to 1286 (TELGRIASHY…SCETQLPVSF (305 aa)) enclose the SEC63 1 domain. Glycyl lysine isopeptide (Lys-Gly) (interchain with G-Cter in SUMO) cross-links involve residues lysine 1071 and lysine 1199. An interaction with TSSC4 region spans residues 1282-2136 (LPVSFRHLIL…KEAETDSDSD (855 aa)). In terms of domain architecture, Helicase ATP-binding 2 spans 1337-1512 (NTVYNSDDNV…WLGCSATSTF (176 aa)). 1350 to 1357 (APTGSGKT) lines the ATP pocket. Threonine 1428 carries the post-translational modification Phosphothreonine. The DEAH box motif lies at 1454 to 1457 (DEVH). Positions 1545–1753 (PVYHAITKHS…TIENKQDAVD (209 aa)) constitute a Helicase C-terminal 2 domain. At threonine 1765 the chain carries Phosphothreonine. The 313-residue stretch at 1812 to 2124 (PLNLGMIAAY…GCDQEYKFSV (313 aa)) folds into the SEC63 2 domain. The residue at position 2002 (serine 2002) is a Phosphoserine. Lysine 2091 is covalently cross-linked (Glycyl lysine isopeptide (Lys-Gly) (interchain with G-Cter in SUMO)). A Phosphothreonine modification is found at threonine 2131. A phosphoserine mark is found at serine 2133 and serine 2135.

This sequence belongs to the helicase family. SKI2 subfamily. In terms of assembly, component of a core complex containing at least PRPF8, SNRNP200, EFTUD2 and SNRNP40. Component of the U5 snRNP and U4/U6-U5 tri-snRNP complexes, building blocks of the spliceosome. Component of the U4/U6-U5 tri-snRNP complex composed of the U4, U6 and U5 snRNAs and at least PRPF3, PRPF4, PRPF6, PRPF8, PRPF31, SNRNP200, TXNL4A, SNRNP40, DDX23, CD2BP2, PPIH, SNU13, EFTUD2, SART1 and USP39. Component of precatalytic, catalytic and postcatalytic spliceosomal complexes. Component of the minor spliceosome, which splices U12-type introns. Interacts with C9orf78; the interaction is direct and mutually exclusive with its interaction with WBP4. Interacts with WBP4; the interaction is mutually exclusive with its interaction with C9orf78. Interacts with PRPF8. Interacts with TSSC4; the interaction is direct, excludes recruitment of C9ORF78 and WBP4 to SNRNP200 and negatively regulates its RNA helicase activity.

The protein localises to the nucleus. It carries out the reaction ATP + H2O = ADP + phosphate + H(+). Catalyzes the ATP-dependent unwinding of U4/U6 RNA duplices, an essential step in the assembly of a catalytically active spliceosome. Plays a role in pre-mRNA splicing as core component of precatalytic, catalytic and postcatalytic spliceosomal complexes. As a component of the minor spliceosome, involved in the splicing of U12-type introns in pre-mRNAs. Involved in spliceosome assembly, activation and disassembly. Mediates changes in the dynamic network of RNA-RNA interactions in the spliceosome. The chain is U5 small nuclear ribonucleoprotein 200 kDa helicase (Snrnp200) from Mus musculus (Mouse).